The chain runs to 394 residues: Choline/ethanolamine kinase (394 aa).

Residue Ala-2 is modified to N-acetylalanine. Positions 22–42 are disordered; that stretch reads GLLDAKCPEPIPNRRRSSSLS. Residues 75-81, Arg-104, 146-152, Gln-244, and Asp-264 each bind ATP; these read SGGLSNL and QYLPSRP. 77–79 contacts substrate; sequence GLS.

It belongs to the choline/ethanolamine kinase family. Homodimer, and heterodimer with CHKA.

It carries out the reaction choline + ATP = phosphocholine + ADP + H(+). It catalyses the reaction ethanolamine + ATP = phosphoethanolamine + ADP + H(+). The protein operates within phospholipid metabolism; phosphatidylethanolamine biosynthesis; phosphatidylethanolamine from ethanolamine: step 1/3. Its function is as follows. Has a key role in phospholipid metabolism, and catalyzes the first step of phosphatidylethanolamine and phosphatidylcholine biosynthesis. This is Choline/ethanolamine kinase (Chkb) from Rattus norvegicus (Rat).